Reading from the N-terminus, the 140-residue chain is RxLR effector protein Avh23 (140 aa).

Positions 1-21 (MRLTYFLTVIVVATLHAGGTA) are cleaved as a signal peptide. Positions 54–72 (RMLRKVKEDTVSKKDHEER) match the RxLR-dEER motif. An ADA2-binding IR1 repeat occupies 100–113 (QGAFQRQNAFVNRD). The stretch at 114–127 (QGAFQRQNAFVKRA) is one ADA2-binding IR2 repeat.

The protein belongs to the RxLR effector family. As to quaternary structure, interacts with host histone acetyl transferase SAGA complex subunit ADA2.

It localises to the secreted. It is found in the host nucleus. The protein resides in the host cytoplasm. In terms of biological role, effector that suppresses plant defense responses during the early stages of pathogen infection. Suppresses cell death induced by effectors and PAMPs in plant hosts. Acts as a modulator of histone acetyltransferase (HAT) in plants. Avh23 binds to the ADA2 subunit of the HAT complex SAGA and disrupts its assembly by interfering with the association of ADA2 with the catalytic subunit GCN5. As such, Avh23 suppresses H3K9 acetylation mediated by the ADA2/GCN5 module and increases plant susceptibility. The polypeptide is RxLR effector protein Avh23 (Phytophthora sojae (Soybean stem and root rot agent)).